The sequence spans 759 residues: Xaa-Pro dipeptidyl-peptidase (759 aa).

Residues Ser-347, Asp-467, and His-497 each act as charge relay system in the active site.

Belongs to the peptidase S15 family. In terms of assembly, homodimer.

It is found in the secreted. It catalyses the reaction Hydrolyzes Xaa-Pro-|- bonds to release unblocked, N-terminal dipeptides from substrates including Ala-Pro-|-p-nitroanilide and (sequentially) Tyr-Pro-|-Phe-Pro-|-Gly-Pro-|-Ile.. Functionally, removes N-terminal dipeptides sequentially from polypeptides having unsubstituted N-termini provided that the penultimate residue is proline. This chain is Xaa-Pro dipeptidyl-peptidase (pepX), found in Streptococcus gordonii.